Here is a 218-residue protein sequence, read N- to C-terminus: Adenylate kinase (218 aa).

Residue 10–15 (GAGKGT) coordinates ATP. Positions 30–59 (STGDMLRAAVKAGSEMGLKAKAVMDAGQLV) are NMP. Residues Thr-31, Arg-36, 57–59 (QLV), 85–88 (GFPR), and Gln-92 contribute to the AMP site. The segment at 122–159 (GRRVHEASGRTYHLVYNPPKVEGKDDVTGEDLVQRADD) is LID. Residues Arg-123 and 132 to 133 (TY) each bind ATP. The AMP site is built by Arg-156 and Arg-167. Gly-203 contributes to the ATP binding site.

This sequence belongs to the adenylate kinase family. Monomer.

Its subcellular location is the cytoplasm. It catalyses the reaction AMP + ATP = 2 ADP. It functions in the pathway purine metabolism; AMP biosynthesis via salvage pathway; AMP from ADP: step 1/1. Catalyzes the reversible transfer of the terminal phosphate group between ATP and AMP. Plays an important role in cellular energy homeostasis and in adenine nucleotide metabolism. The sequence is that of Adenylate kinase from Marinomonas sp. (strain MWYL1).